The sequence spans 317 residues: Acetyl-coenzyme A carboxylase carboxyl transferase subunit alpha (317 aa).

Residues 37–292 enclose the CoA carboxyltransferase C-terminal domain; that stretch reads QISQKLEDTK…EEYILKAFNE (256 aa).

This sequence belongs to the AccA family. As to quaternary structure, acetyl-CoA carboxylase is a heterohexamer composed of biotin carboxyl carrier protein (AccB), biotin carboxylase (AccC) and two subunits each of ACCase subunit alpha (AccA) and ACCase subunit beta (AccD).

The protein localises to the cytoplasm. The catalysed reaction is N(6)-carboxybiotinyl-L-lysyl-[protein] + acetyl-CoA = N(6)-biotinyl-L-lysyl-[protein] + malonyl-CoA. It functions in the pathway lipid metabolism; malonyl-CoA biosynthesis; malonyl-CoA from acetyl-CoA: step 1/1. Its function is as follows. Component of the acetyl coenzyme A carboxylase (ACC) complex. First, biotin carboxylase catalyzes the carboxylation of biotin on its carrier protein (BCCP) and then the CO(2) group is transferred by the carboxyltransferase to acetyl-CoA to form malonyl-CoA. The sequence is that of Acetyl-coenzyme A carboxylase carboxyl transferase subunit alpha from Flavobacterium psychrophilum (strain ATCC 49511 / DSM 21280 / CIP 103535 / JIP02/86).